A 159-amino-acid chain; its full sequence is Large ribosomal subunit protein eL24 (159 aa).

The segment at 118–159 (ANKAVRAAKAAANKEKKASQPKTQQKTAKNVKTAAPRVGGKR) is disordered. A compositionally biased stretch (polar residues) spans 137–147 (QPKTQQKTAKN).

It belongs to the eukaryotic ribosomal protein eL24 family.

The chain is Large ribosomal subunit protein eL24 from Caenorhabditis elegans.